The chain runs to 293 residues: Proline iminopeptidase (293 aa).

Residues 28 to 277 (KPLVLLHGGP…YSRHMPFVEE (250 aa)) form the AB hydrolase-1 domain. The active-site Nucleophile is the Ser104. Residue Asp244 is part of the active site. His271 functions as the Proton donor in the catalytic mechanism.

It belongs to the peptidase S33 family.

It catalyses the reaction Release of N-terminal proline from a peptide.. In terms of biological role, releases the N-terminal proline from various substrates. The chain is Proline iminopeptidase from Clostridioides difficile (strain 630) (Peptoclostridium difficile).